The chain runs to 896 residues: Zinc finger protein 574 (896 aa).

2 C2H2-type zinc fingers span residues Y16–H38 and Y76–H98. S113 carries the post-translational modification Phosphoserine. The segment at Y126 to H148 adopts a C2H2-type 3 zinc-finger fold. The residue at position 164 (S164) is a Phosphoserine. The C2H2-type 4 zinc finger occupies Y214–H236. Residues A239–A301 are disordered. Residues P247–S257 show a composition bias toward polar residues. Residues H274–D287 show a composition bias toward basic and acidic residues. S298 is subject to Phosphoserine. C2H2-type zinc fingers lie at residues L309–H331, F336–H358, F364–H386, and H392–H413. A disordered region spans residues F434 to P460. The C2H2-type 9 zinc-finger motif lies at Y466 to H489. Residues H495–H517 form a C2H2-type 10; degenerate zinc finger. 4 consecutive C2H2-type zinc fingers follow at residues F523 to H545, Y551 to H573, Y579 to H601, and Y607 to H630. A C2H2-type 15; degenerate zinc finger spans residues H636–A659. The C2H2-type 16 zinc finger occupies F667–H689. A disordered region spans residues A687–A733. A compositionally biased stretch (low complexity) spans A707–P732. The residue at position 717 (S717) is a Phosphoserine. Position 724 is a phosphothreonine (T724). At S728 the chain carries Phosphoserine. C2H2-type zinc fingers lie at residues L738–H760, Y766–H788, F794–H816, and Y822–H844. At R832 the chain carries Asymmetric dimethylarginine.

It belongs to the krueppel C2H2-type zinc-finger protein family.

It localises to the nucleus. Functionally, may be involved in transcriptional regulation. The protein is Zinc finger protein 574 (ZNF574) of Homo sapiens (Human).